The primary structure comprises 72 residues: Phycobilisome 37.5 kDa linker polypeptide, phycocyanin-associated, rod (72 aa).

A PBS-linker domain is found at M1 to F72.

It belongs to the phycobilisome linker protein family.

It localises to the cellular thylakoid membrane. Its function is as follows. Rod linker protein, associated with phycocyanin. Linker polypeptides determine the state of aggregation and the location of the disk-shaped phycobiliprotein units within the phycobilisome and modulate their spectroscopic properties in order to mediate a directed and optimal energy transfer. In Pseudanabaena tenuis (strain PCC 7409), this protein is Phycobilisome 37.5 kDa linker polypeptide, phycocyanin-associated, rod (cpcH2).